The following is an 834-amino-acid chain: Arf-GAP with coiled-coil, ANK repeat and PH domain-containing protein 3 (834 aa).

A PH domain is found at 268 to 363 (GVVMEGYLFK…WVQAVQASIA (96 aa)). The segment at 375–400 (SERLDRTASPSTSSIDSATDTRERGV) is disordered. A compositionally biased stretch (polar residues) spans 382-392 (ASPSTSSIDSA). The Arf-GAP domain occupies 403 to 525 (ESVLQRVQSV…KFLRKAPMAP (123 aa)). The C4-type zinc finger occupies 418 to 441 (CGDCGQPDPRWASINLGVLLCIEC). The interval 633–653 (SVTEEEGAESEESSGEADGDT) is disordered. Residues 634 to 653 (VTEEEGAESEESSGEADGDT) show a composition bias toward acidic residues. ANK repeat units lie at residues 702–731 (EGKT…DVNQ), 735–764 (RGRA…DQHA), and 768–797 (EQRD…AEEM).

In terms of biological role, GTPase-activating protein for the ADP ribosylation factor family. The protein is Arf-GAP with coiled-coil, ANK repeat and PH domain-containing protein 3 (ACAP3) of Homo sapiens (Human).